The chain runs to 108 residues: UPF0060 membrane protein RHOS4_03690 (108 aa).

4 consecutive transmembrane segments (helical) span residues 5-25 (LAAY…VWAW), 32-52 (ALWL…LALT), 62-82 (AVYG…VEGV), and 86-106 (RWDM…LWAP).

It belongs to the UPF0060 family.

The protein resides in the cell inner membrane. The polypeptide is UPF0060 membrane protein RHOS4_03690 (Cereibacter sphaeroides (strain ATCC 17023 / DSM 158 / JCM 6121 / CCUG 31486 / LMG 2827 / NBRC 12203 / NCIMB 8253 / ATH 2.4.1.) (Rhodobacter sphaeroides)).